The following is a 59-amino-acid chain: Small integral membrane protein 30 (59 aa).

Residues 1-24 (MTSVSTQLSLVLMSLLLVLPVVEA) form the signal peptide. The Extracellular segment spans residues 25–29 (VEAGD). Residues 30-50 (AIALLLGVVLSITGICACLGV) form a helical membrane-spanning segment. Residues 51–59 (YARKRNGQM) are Cytoplasmic-facing.

In terms of assembly, interacts (via transmembrane domain) with antiviral protein MAVS (via transmembrane domain); the interaction disrupts MAVS interaction with RIGI and inhibits MAVS aggregation, resulting in the repression of type I interferon signaling and innate immune responses.

It is found in the endoplasmic reticulum membrane. The protein localises to the mitochondrion membrane. Its function is as follows. Negatively regulates antiviral innate immune responses. Disrupts the interaction of antiviral protein MAVS with innate immune receptor RIGI and inhibits MAVS aggregation, resulting in the repression of type I interferon signaling and innate immune responses. This chain is Small integral membrane protein 30, found in Homo sapiens (Human).